The following is a 94-amino-acid chain: Co-chaperonin GroES (94 aa).

It belongs to the GroES chaperonin family. In terms of assembly, heptamer of 7 subunits arranged in a ring. Interacts with the chaperonin GroEL.

Its subcellular location is the cytoplasm. Together with the chaperonin GroEL, plays an essential role in assisting protein folding. The GroEL-GroES system forms a nano-cage that allows encapsulation of the non-native substrate proteins and provides a physical environment optimized to promote and accelerate protein folding. GroES binds to the apical surface of the GroEL ring, thereby capping the opening of the GroEL channel. This chain is Co-chaperonin GroES, found in Orientia tsutsugamushi (Rickettsia tsutsugamushi).